A 1141-amino-acid polypeptide reads, in one-letter code: DNA-directed RNA polymerase subunit beta (1141 aa).

The protein belongs to the RNA polymerase beta chain family. In terms of assembly, the RNAP catalytic core consists of 2 alpha, 1 beta, 1 beta' and 1 omega subunit. When a sigma factor is associated with the core the holoenzyme is formed, which can initiate transcription.

It carries out the reaction RNA(n) + a ribonucleoside 5'-triphosphate = RNA(n+1) + diphosphate. Its function is as follows. DNA-dependent RNA polymerase catalyzes the transcription of DNA into RNA using the four ribonucleoside triphosphates as substrates. The protein is DNA-directed RNA polymerase subunit beta of Frankia alni (strain DSM 45986 / CECT 9034 / ACN14a).